Here is a 141-residue protein sequence, read N- to C-terminus: Putative nickel-responsive regulator (141 aa).

Ni(2+) contacts are provided by His-80, His-91, His-93, and Cys-99.

The protein belongs to the transcriptional regulatory CopG/NikR family. The cofactor is Ni(2+).

Transcriptional regulator. The chain is Putative nickel-responsive regulator from Methanococcus maripaludis (strain DSM 14266 / JCM 13030 / NBRC 101832 / S2 / LL).